The following is a 313-amino-acid chain: Formimidoylglutamase (313 aa).

Mn(2+)-binding residues include H130, D155, H157, D159, D241, and D243.

It belongs to the arginase family. The cofactor is Mn(2+).

The enzyme catalyses N-formimidoyl-L-glutamate + H2O = formamide + L-glutamate. It participates in amino-acid degradation; L-histidine degradation into L-glutamate; L-glutamate from N-formimidoyl-L-glutamate (hydrolase route): step 1/1. In terms of biological role, catalyzes the conversion of N-formimidoyl-L-glutamate to L-glutamate and formamide. The sequence is that of Formimidoylglutamase from Citrobacter koseri (strain ATCC BAA-895 / CDC 4225-83 / SGSC4696).